We begin with the raw amino-acid sequence, 66 residues long: Large ribosomal subunit protein bL33 (66 aa).

The protein belongs to the bacterial ribosomal protein bL33 family.

This is Large ribosomal subunit protein bL33 from Wolbachia pipientis subsp. Culex pipiens (strain wPip).